The chain runs to 461 residues: Ribulose bisphosphate carboxylase (461 aa).

N113 provides a ligand contact to substrate. K168 acts as the Proton acceptor in catalysis. K170 is a binding site for substrate. K193, D195, and E196 together coordinate Mg(2+). Residue K193 is modified to N6-carboxylysine. Residue H289 is the Proton acceptor of the active site. The substrate site is built by R290, H323, and S370.

This sequence belongs to the RuBisCO large chain family. Type II subfamily. Homodimer. Mg(2+) serves as cofactor.

The enzyme catalyses 2 (2R)-3-phosphoglycerate + 2 H(+) = D-ribulose 1,5-bisphosphate + CO2 + H2O. The catalysed reaction is D-ribulose 1,5-bisphosphate + O2 = 2-phosphoglycolate + (2R)-3-phosphoglycerate + 2 H(+). Functionally, ruBisCO catalyzes two reactions: the carboxylation of D-ribulose 1,5-bisphosphate, the primary event in carbon dioxide fixation, as well as the oxidative fragmentation of the pentose substrate. Both reactions occur simultaneously and in competition at the same active site. The sequence is that of Ribulose bisphosphate carboxylase from Thiomonas intermedia (strain K12) (Thiobacillus intermedius).